Consider the following 728-residue polypeptide: Beta-porphyranase A (728 aa).

The first 22 residues, 1–22 (MSYKYIFLLSAFTLGVPPGIYC), serve as a signal peptide directing secretion. Positions 53, 76, 78, 87, 114, and 151 each coordinate substrate. The active-site Proton donor is glutamate 152. Substrate is bound by residues histidine 235, glutamate 279, serine 326, and tryptophan 331. The active-site Nucleophile is the glutamate 279. The CBM-cenC domain maps to 599–701 (TLQNGTFSEG…AVSFDFNSTV (103 aa)).

This sequence belongs to the glycosyl hydrolase 86 family.

It carries out the reaction Hydrolysis of beta-D-galactopyranose-(1-&gt;4)-alpha-L-galactopyranose-6-sulfate linkages in porphyran.. Functionally, cleaves the sulfated polysaccharide porphyran at the (1-&gt;4) linkages between beta-D-galactopyranose and alpha-L-galactopyranose-6-sulfate, forming mostly the disaccharide alpha-L-galactopyranose-6-sulfate-(1-&gt;3)-beta-D-galactose. Some longer oligosaccharides of even number of residues are also observed. Inactive on the non-sulfated agarose portion of the porphyran backbone. Can also use methylated galactoses. This chain is Beta-porphyranase A, found in Phocaeicola plebeius (strain DSM 17135 / JCM 12973 / CCUG 54634 / M2) (Bacteroides plebeius).